The following is a 626-amino-acid chain: Endo-1,3(4)-beta-glucanase xgeA (626 aa).

A signal peptide spans Met-1–Ala-25. Residues Glu-33–Gly-286 form the GH16 domain. An N-linked (GlcNAc...) asparagine glycan is attached at Asn-61. The Nucleophile role is filled by Glu-142. Glu-147 (proton donor) is an active-site residue. Positions Ala-477 to Ser-494 are enriched in low complexity. The segment at Ala-477–Val-533 is disordered. The segment covering Asn-495–Val-533 has biased composition (polar residues). Gly-603 is lipidated: GPI-anchor amidated glycine. Positions Val-604–Asn-626 are cleaved as a propeptide — removed in mature form.

Belongs to the glycosyl hydrolase 16 family.

It is found in the cell membrane. It catalyses the reaction Endohydrolysis of (1-&gt;3)- or (1-&gt;4)-linkages in beta-D-glucans when the glucose residue whose reducing group is involved in the linkage to be hydrolyzed is itself substituted at C-3.. Mixed-linked glucanase involved in the degradation of complex natural cellulosic substrates. Active on laminarin. lichenan, soluble carboxymethyl cellulose but not on pustulan. This chain is Endo-1,3(4)-beta-glucanase xgeA (xgeA), found in Emericella nidulans (strain FGSC A4 / ATCC 38163 / CBS 112.46 / NRRL 194 / M139) (Aspergillus nidulans).